A 447-amino-acid polypeptide reads, in one-letter code: N-succinylarginine dihydrolase (447 aa).

Substrate contacts are provided by residues 19-28, asparagine 110, and 137-138; these read AGLSFGNEAS and HR. Glutamate 174 is an active-site residue. Residue arginine 212 coordinates substrate. Histidine 248 is a catalytic residue. Substrate-binding residues include aspartate 250 and asparagine 359. The active-site Nucleophile is cysteine 365.

This sequence belongs to the succinylarginine dihydrolase family. Homodimer.

It catalyses the reaction N(2)-succinyl-L-arginine + 2 H2O + 2 H(+) = N(2)-succinyl-L-ornithine + 2 NH4(+) + CO2. It functions in the pathway amino-acid degradation; L-arginine degradation via AST pathway; L-glutamate and succinate from L-arginine: step 2/5. In terms of biological role, catalyzes the hydrolysis of N(2)-succinylarginine into N(2)-succinylornithine, ammonia and CO(2). This chain is N-succinylarginine dihydrolase, found in Salmonella heidelberg (strain SL476).